The sequence spans 540 residues: Chaperonin GroEL (540 aa).

Residues 29-32 (TLGP), 86-90 (DGTTT), Gly-413, 477-479 (DAL), and Asp-493 each bind ATP.

It belongs to the chaperonin (HSP60) family. Forms a cylinder of 14 subunits composed of two heptameric rings stacked back-to-back. Interacts with the co-chaperonin GroES.

Its subcellular location is the cytoplasm. It carries out the reaction ATP + H2O + a folded polypeptide = ADP + phosphate + an unfolded polypeptide.. Its function is as follows. Together with its co-chaperonin GroES, plays an essential role in assisting protein folding. The GroEL-GroES system forms a nano-cage that allows encapsulation of the non-native substrate proteins and provides a physical environment optimized to promote and accelerate protein folding. The protein is Chaperonin GroEL of Clostridium botulinum (strain Alaska E43 / Type E3).